The primary structure comprises 303 residues: Diaminopimelate epimerase (303 aa).

The substrate site is built by Asn-15, Gln-47, and Asn-67. Cys-76 acts as the Proton donor in catalysis. Substrate contacts are provided by residues 77-78, Asn-163, Asn-197, and 215-216; these read GN and ER. Cys-224 (proton acceptor) is an active-site residue. 225-226 contributes to the substrate binding site; it reads GS. The segment at 279 to 303 is disordered; it reads DPATGEWSRDTQGLQGSGNADRGTA.

This sequence belongs to the diaminopimelate epimerase family. As to quaternary structure, homodimer.

Its subcellular location is the cytoplasm. The enzyme catalyses (2S,6S)-2,6-diaminopimelate = meso-2,6-diaminopimelate. It functions in the pathway amino-acid biosynthesis; L-lysine biosynthesis via DAP pathway; DL-2,6-diaminopimelate from LL-2,6-diaminopimelate: step 1/1. Its function is as follows. Catalyzes the stereoinversion of LL-2,6-diaminopimelate (L,L-DAP) to meso-diaminopimelate (meso-DAP), a precursor of L-lysine and an essential component of the bacterial peptidoglycan. The chain is Diaminopimelate epimerase from Brucella canis (strain ATCC 23365 / NCTC 10854 / RM-666).